A 451-amino-acid polypeptide reads, in one-letter code: Putative gluconeogenesis factor (451 aa).

It belongs to the gluconeogenesis factor family.

The protein resides in the cytoplasm. Its function is as follows. Required for morphogenesis under gluconeogenic growth conditions. This is Putative gluconeogenesis factor from Clostridium acetobutylicum (strain ATCC 824 / DSM 792 / JCM 1419 / IAM 19013 / LMG 5710 / NBRC 13948 / NRRL B-527 / VKM B-1787 / 2291 / W).